We begin with the raw amino-acid sequence, 626 residues long: Chaperone protein HtpG (626 aa).

Residues 1–341 (METKQFKAES…SEDLSLNISR (341 aa)) are a; substrate-binding. The interval 342-552 (EILQHDRQLK…EGELSIEMEK (211 aa)) is b. Residues 553-626 (VLNAMPNNQN…FTNNICKIMK (74 aa)) form a c region.

It belongs to the heat shock protein 90 family. As to quaternary structure, homodimer.

It localises to the cytoplasm. Molecular chaperone. Has ATPase activity. In Clostridium botulinum (strain 657 / Type Ba4), this protein is Chaperone protein HtpG.